A 744-amino-acid polypeptide reads, in one-letter code: Tripartite motif-containing protein 2 (744 aa).

Ser10 is modified (phosphoserine). The RING-type zinc-finger motif lies at 23–64 (CSICLERYKNPKVLPCLHTFCERCLQNYIPAHSLTLSCPVCR). Residues 113–154 (GKPLSCPNHDGNVMEFYCQSCETAMCRECTEGEHAEHPTVPL) form a B box-type zinc finger. Cys118, His121, Cys141, and His146 together coordinate Zn(2+). The Filamin repeat unit spans residues 320–421 (TTNAVASETV…IRGSPFKLKV (102 aa)). Phosphothreonine is present on Thr371. Ser375, Ser424, and Ser428 each carry phosphoserine. Positions 432-462 (EGVKRRVKSPGSGHVKQKAVKRPASMYSTGK) are disordered. NHL repeat units follow at residues 473–516 (IFRV…FSND), 520–563 (KSRF…FSND), 564–605 (GKFK…FQPN), 609–652 (VTRF…FNQE), 656–699 (MLKF…FDGS), and 700–743 (GSFL…YRYL).

This sequence belongs to the TRIM/RBCC family. As to quaternary structure, forms homooligomers. Interacts with TRIM3; this interaction reduces TRIM2 activity. Interacts with myosin V; myosin V may not be a substrate for ubiquitination. Interacts with NEFL. Interacts with phosphorylated BCL2L11. Interacts with SIRPA. RING-type zinc finger-dependent and UBE2D1-dependent autoubiquitination.

The enzyme catalyses S-ubiquitinyl-[E2 ubiquitin-conjugating enzyme]-L-cysteine + [acceptor protein]-L-lysine = [E2 ubiquitin-conjugating enzyme]-L-cysteine + N(6)-ubiquitinyl-[acceptor protein]-L-lysine.. It participates in protein modification; protein ubiquitination. Its function is as follows. UBE2D1-dependent E3 ubiquitin-protein ligase that mediates the ubiquitination of NEFL and of phosphorylated BCL2L11. Plays a neuroprotective function. May play a role in neuronal rapid ischemic tolerance. Plays a role in antiviral immunity and limits New World arenavirus infection independently of its ubiquitin ligase activity. This chain is Tripartite motif-containing protein 2 (Trim2), found in Rattus norvegicus (Rat).